Consider the following 1447-residue polypeptide: Bud site selection protein 4 (1447 aa).

A compositionally biased stretch (basic and acidic residues) spans 1 to 16; it reads MHDAESTVDSLLKEID. Disordered regions lie at residues 1-37 and 57-76; these read MHDA…TPHN and NTRS…KMST. Residue Ser-10 is modified to Phosphoserine. Polar residues-rich tracts occupy residues 22–32 and 59–76; these read TKSNITQNGSE and RSNA…KMST. Ser-78, Ser-81, Ser-91, Ser-96, and Ser-167 each carry phosphoserine. The disordered stretch occupies residues 272–316; that stretch reads NLPSKLLNTSNNSHSDSRSPTASVEDLNISTNLPGADSSQNNPVT. Over residues 277–316 the composition is skewed to polar residues; sequence LLNTSNNSHSDSRSPTASVEDLNISTNLPGADSSQNNPVT. Thr-365 bears the Phosphothreonine mark. Ser-367 bears the Phosphoserine mark. Residues 444 to 588 form a disordered region; that stretch reads HQESEHANEQ…VEENEESEHV (145 aa). Residues 475-494 are compositionally biased toward basic and acidic residues; the sequence is EFQRNSKDGEEYRIVQHEES. Polar residues predominate over residues 497 to 509; the sequence is GQRTKSSEENIIN. Ser-511 carries the post-translational modification Phosphoserine. Polar residues predominate over residues 538-548; sequence SSSCEDQSVSE. Over residues 549-580 the composition is skewed to basic and acidic residues; sequence ARNKDSIEEKEVETKDENIETEKDESEYHKVE. Ser-616 is subject to Phosphoserine. The segment covering 649 to 664 has biased composition (polar residues); the sequence is NSQFSQQSSITTASTV. Positions 649-672 are disordered; sequence NSQFSQQSSITTASTVDSKKDNGS. An interaction with IQG1 region spans residues 768–879; that stretch reads EHENIPLSTH…SLWESSYELK (112 aa). Residues Ser-805 and Ser-811 each carry the phosphoserine modification. The region spanning 1302 to 1413 is the PH domain; that stretch reads NIYKEGYLLQ…WYNKLQEVVE (112 aa).

Belongs to the BUD4 family. Interacts with AXL1, IQG1 and SEC3. Post-translationally, phosphorylated by CDC28.

It localises to the bud neck. Required for establishment of the axial budding pattern in haploid cells. Cooperates with other bud site selection proteins to recognize a spatial landmark during mitosis and they subsequently become a landmark for downstream polarity establishment factors that coordinate axial budding and cytokinesis. Involved in the septin organization at the bud neck. This is Bud site selection protein 4 (BUD4) from Saccharomyces cerevisiae (strain YJM789) (Baker's yeast).